A 320-amino-acid polypeptide reads, in one-letter code: Cytochrome c biogenesis protein CcsA (320 aa).

8 helical membrane-spanning segments follow: residues 9 to 29, 36 to 56, 70 to 90, 97 to 117, 143 to 163, 227 to 247, 254 to 274, and 288 to 308; these read ILAH…WGTL, LSSS…GLLI, LYES…LLEV, WLGA…TLGL, ILFS…LLVI, AIGL…IWAN, WSWD…AIYL, and AIVA…VNLL.

Belongs to the CcmF/CycK/Ccl1/NrfE/CcsA family. In terms of assembly, may interact with Ccs1.

The protein localises to the plastid. The protein resides in the chloroplast thylakoid membrane. Its function is as follows. Required during biogenesis of c-type cytochromes (cytochrome c6 and cytochrome f) at the step of heme attachment. The polypeptide is Cytochrome c biogenesis protein CcsA (Pinus thunbergii (Japanese black pine)).